Here is a 489-residue protein sequence, read N- to C-terminus: Lysine--tRNA ligase (489 aa).

Residues E398 and E405 each coordinate Mg(2+).

The protein belongs to the class-II aminoacyl-tRNA synthetase family. Homodimer. The cofactor is Mg(2+).

The protein localises to the cytoplasm. The enzyme catalyses tRNA(Lys) + L-lysine + ATP = L-lysyl-tRNA(Lys) + AMP + diphosphate. The chain is Lysine--tRNA ligase from Moorella thermoacetica (strain ATCC 39073 / JCM 9320).